The sequence spans 354 residues: Transcription activator of gluconeogenesis ERT1-1 (354 aa).

The tract at residues 1-29 (MSFYPILRGPAKQESPPPPPAPKKRRKTA) is disordered. A DNA-binding region (zn(2)-C6 fungal-type) is located at residues 32–60 (CLHCQKAHLTCDEGRPCARCIKKNMGDQC). Disordered stretches follow at residues 71-111 (LVGL…FGSS) and 128-169 (DTSS…QGSP). The span at 81-98 (QATQQKQQQQQQQQQAVQ) shows a compositional bias: low complexity. Polar residues predominate over residues 159–169 (SQTAGTPQGSP).

It belongs to the ERT1/acuK family.

Its subcellular location is the nucleus. Its function is as follows. Transcription factor which regulates nonfermentable carbon utilization. Activator of gluconeogenetic genes. The polypeptide is Transcription activator of gluconeogenesis ERT1-1 (ERT1-1) (Yarrowia lipolytica (strain CLIB 122 / E 150) (Yeast)).